Reading from the N-terminus, the 187-residue chain is UPF0301 protein LPC_2717 (187 aa).

The protein belongs to the UPF0301 (AlgH) family.

In Legionella pneumophila (strain Corby), this protein is UPF0301 protein LPC_2717.